Consider the following 270-residue polypeptide: Tetraspanin-14 (270 aa).

Residues 1–17 (MHYYRYSNAKVSCWYKY) lie on the Cytoplasmic side of the membrane. The helical transmembrane segment at 18 to 38 (LLFSYNIIFWLAGVVFLGVGL) threads the bilayer. The Extracellular segment spans residues 39–61 (WAWSEKGVLSDLTKVTRMHGIDP). A helical membrane pass occupies residues 62–82 (VVLVLMVGVVMFTLGFAGCVG). Topologically, residues 83–92 (ALRENICLLN) are cytoplasmic. Residues 93 to 113 (FFCGTIVLIFFLELAVAVLAF) traverse the membrane as a helical segment. Residues 114–232 (LFQDWVRDRF…QALESWLPRN (119 aa)) are Extracellular-facing. Residues 114–232 (LFQDWVRDRF…QALESWLPRN (119 aa)) form a necessary and sufficient for interaction with ADAM10 region. Cystine bridges form between cysteine 153–cysteine 221, cysteine 154–cysteine 186, cysteine 170–cysteine 180, and cysteine 187–cysteine 200. Asparagine 169 carries N-linked (GlcNAc...) asparagine glycosylation. The helical transmembrane segment at 233–253 (IYIVAGVFIAISLLQIFGIFL) threads the bilayer. Over 254–270 (ARTLISDIEAVKAGHHF) the chain is Cytoplasmic.

Belongs to the tetraspanin (TM4SF) family. In terms of assembly, interacts with ADAM10; the interaction promotes ADAM10 maturation and cell surface expression.

The protein localises to the cell membrane. Functionally, part of TspanC8 subgroup, composed of 6 members that interact with the transmembrane metalloprotease ADAM10. This interaction is required for ADAM10 exit from the endoplasmic reticulum and for enzymatic maturation and trafficking to the cell surface as well as substrate specificity. Different TspanC8/ADAM10 complexes have distinct substrates. Negatively regulates ADAM10-mediated cleavage of GP6. Promotes ADAM10-mediated cleavage of CDH5. This Homo sapiens (Human) protein is Tetraspanin-14.